The following is a 58-amino-acid chain: uncharacterized protein (58 aa).

Residues 18 to 38 (WLMIVLLFCSTGMVFLATILE) form a helical membrane-spanning segment.

The protein resides in the membrane. This is an uncharacterized protein from Saccharomyces cerevisiae (strain ATCC 204508 / S288c) (Baker's yeast).